Here is a 451-residue protein sequence, read N- to C-terminus: UPF0210 protein APL_1491 (451 aa).

This sequence belongs to the UPF0210 family. As to quaternary structure, homodimer.

The chain is UPF0210 protein APL_1491 from Actinobacillus pleuropneumoniae serotype 5b (strain L20).